We begin with the raw amino-acid sequence, 259 residues long: Protein odd-skipped-related 1 (259 aa).

3 C2H2-type zinc fingers span residues Phe168 to His190, Tyr196 to His218, and Phe224 to His246.

This sequence belongs to the Odd C2H2-type zinc-finger protein family. In terms of tissue distribution, at early gastrula stage, expressed in the involuting mesoderm and endoderm. During neurulation, expressed in the pronephric primordium, following expression of osr2. During tailbud (stage 35), expressed in the rectal diverticulum and in the kidney ducts.

Its subcellular location is the nucleus. In terms of biological role, transcriptional repressor. Required for pronephric kidney development. The chain is Protein odd-skipped-related 1 from Xenopus laevis (African clawed frog).